The chain runs to 595 residues: Inactive glycosyltransferase 25 family member 3 (595 aa).

The signal sequence occupies residues 1 to 22; it reads MRAARAAPLLQLLLLLGPWLEA. N-linked (GlcNAc...) asparagine glycans are attached at residues asparagine 75, asparagine 153, asparagine 237, and asparagine 360. The segment at 548–595 is disordered; sequence DTETSSPWDDDSGRLISWSGSQKTLRSPRLDLTGSSGHSLQPQPRDEL. Polar residues predominate over residues 580–589; it reads TGSSGHSLQP. A Prevents secretion from ER motif is present at residues 592–595; it reads RDEL.

Belongs to the glycosyltransferase 25 family. In terms of tissue distribution, ubiquitous. Highly expressed in secretory and nervous tissues.

The protein localises to the endoplasmic reticulum lumen. In terms of biological role, probable cell adhesion protein involved in leukocyte transmigration across the blood-brain barrier. Does not express any beta-galactosyltransferase activity in vitro. The polypeptide is Inactive glycosyltransferase 25 family member 3 (CERCAM) (Homo sapiens (Human)).